The chain runs to 127 residues: UPF0102 protein Reut_A3265 (127 aa).

This sequence belongs to the UPF0102 family.

This is UPF0102 protein Reut_A3265 from Cupriavidus pinatubonensis (strain JMP 134 / LMG 1197) (Cupriavidus necator (strain JMP 134)).